The following is a 130-amino-acid chain: Small ribosomal subunit protein uS8 (130 aa).

It belongs to the universal ribosomal protein uS8 family. Part of the 30S ribosomal subunit.

Its function is as follows. One of the primary rRNA binding proteins, it binds directly to 16S rRNA central domain where it helps coordinate assembly of the platform of the 30S subunit. The polypeptide is Small ribosomal subunit protein uS8 (Pyrobaculum neutrophilum (strain DSM 2338 / JCM 9278 / NBRC 100436 / V24Sta) (Thermoproteus neutrophilus)).